We begin with the raw amino-acid sequence, 465 residues long: Hydroxyacid-oxoacid transhydrogenase, mitochondrial (465 aa).

The protein belongs to the iron-containing alcohol dehydrogenase family. Hydroxyacid-oxoacid transhydrogenase subfamily.

It is found in the mitochondrion. The enzyme catalyses (S)-3-hydroxybutanoate + 2-oxoglutarate = (R)-2-hydroxyglutarate + acetoacetate. It carries out the reaction 4-hydroxybutanoate + 2-oxoglutarate = (R)-2-hydroxyglutarate + succinate semialdehyde. Functionally, catalyzes the cofactor-independent reversible oxidation of gamma-hydroxybutyrate (GHB) to succinic semialdehyde (SSA) coupled to reduction of 2-ketoglutarate (2-KG) to D-2-hydroxyglutarate (D-2-HG). L-3-hydroxybutyrate (L-3-OHB) is also a substrate for HOT when using 2-KG as hydrogen acceptor, resulting in the formation of D-2-HG. This chain is Hydroxyacid-oxoacid transhydrogenase, mitochondrial, found in Caenorhabditis elegans.